We begin with the raw amino-acid sequence, 267 residues long: Short-chain dehydrogenase/reductase GME11361 (267 aa).

NADP(+)-binding residues include I10, T36, K42, D57, N80, Y129, K133, V162, and S164. The active-site Proton acceptor is Y129. The active-site Lowers pKa of active site Tyr is K133.

Belongs to the short-chain dehydrogenases/reductases (SDR) family.

It participates in secondary metabolite biosynthesis. Short-chain dehydrogenase/reductase; part of the gene cluster that mediates the biosynthesis of dibenzodioxocinones such as pestalotiollide B, a novel class of inhibitors against cholesterol ester transfer protein (CEPT). The biosynthesis initiates from condensation of acetate and malonate units catalyzed by the non-reducing PKS pks8/GME11356. Pks8/GME11356 lacks a thioesterase (TE) domain, which is important to the cyclizing of the third ring of atrochrysone carboxylic acid, and the esterase GME11355 might play the role of TE and catalyzes the cyclization reaction of the C ring. The lactamase-like protein GME11357 (or other beta-lactamases in Pestalotiopsis microspora) probably hydrolyzes the thioester bond between the ACP of pks8/GME11356 and the intermediate to release atrochrysone carboxylic acid, which is spontaneously dehydrates to form endocrocin anthrone. Endocrocin anthrone is further converted to emodin via the endocrocin intermediate. Emodin is then oxidized by several enzymes such as the Baeyer-Villiger oxidase GME11358, the oxidoreductase GME11367, the short chain dehydrogenase/reductase GME11373, as well as by other oxidoreductases from the cluster, to modify the A and C rings and open the B ring, and finally yield monodictyphenone. The prenyltransferase GME11375 may catalyze the addition reaction between the C5 side chains and the carbon bone of dibenzodioxocinones. The remaining biochemical reactions to the final product dibenzodioxocinones should be methylation catalyzed by methyltransferase GME11366 and reduction and lactonization reaction catalyzed by a series of oxidordeuctases. This is Short-chain dehydrogenase/reductase GME11361 from Pestalotiopsis microspora.